The primary structure comprises 185 residues: Ribosome-recycling factor (185 aa).

Belongs to the RRF family.

The protein localises to the cytoplasm. Responsible for the release of ribosomes from messenger RNA at the termination of protein biosynthesis. May increase the efficiency of translation by recycling ribosomes from one round of translation to another. The protein is Ribosome-recycling factor of Halorhodospira halophila (strain DSM 244 / SL1) (Ectothiorhodospira halophila (strain DSM 244 / SL1)).